Reading from the N-terminus, the 529-residue chain is Acid-sensing ion channel 1C (529 aa).

Residues 1–51 (MTAMKGDSEDSIESMRPSNLQVFANNSTLHGMSHIFAYGHMTFRRFLWTLS) are Cytoplasmic-facing. Residues 52–68 (FMGSLGLLMYVCMDRVY) form a helical membrane-spanning segment. The Extracellular portion of the chain corresponds to 69 to 427 (YYFEFPHVTK…EKIEQKKAYE (359 aa)). 3 N-linked (GlcNAc...) asparagine glycosylation sites follow: N86, N155, and N161. 7 disulfides stabilise this stretch: C95–C196, C174–C181, C292–C367, C310–C363, C314–C361, C323–C345, and C325–C337. N185 carries N-linked (GlcNAc...) asparagine glycosylation. 2 N-linked (GlcNAc...) asparagine glycosylation sites follow: N368 and N395. Residues 428-458 (VAGLLGDIGGQMGLFIGASVLTILEIFDYLY) form a discontinuously helical membrane-spanning segment. Positions 444 to 446 (GAS) match the GAS motif; ion selectivity filter motif. Residues 459-529 (EVLKDKILGS…PFVVGSNSGK (71 aa)) lie on the Cytoplasmic side of the membrane.

This sequence belongs to the amiloride-sensitive sodium channel (TC 1.A.6) family. ASIC1 subfamily. Homotrimer. Heterotrimer; with other ASIC proteins producing channel with different properties. Interacts with asic1a. Expressed in central nervous system.

It is found in the cell membrane. The protein localises to the postsynaptic cell membrane. It localises to the cell projection. Its subcellular location is the dendrite. The enzyme catalyses Na(+)(in) = Na(+)(out). It catalyses the reaction K(+)(in) = K(+)(out). It carries out the reaction Li(+)(in) = Li(+)(out). The catalysed reaction is Ca(2+)(in) = Ca(2+)(out). Its activity is regulated as follows. Inhibited by the diuretic drug amiloride. Forms voltage-independent, pH-gated trimeric sodium channels that act as postsynaptic excitatory receptors in the nervous system, playing a crucial role in regulating synaptic plasticity, learning, and memory. Upon extracellular pH drop this channel elicits transient, fast activating, and completely desensitizing inward currents. Displays high selectivity for sodium ions but can also permit the permeation of other cations. The protein is Acid-sensing ion channel 1C of Danio rerio (Zebrafish).